The following is a 636-amino-acid chain: Chaperone protein DnaK (636 aa).

Residues 579–636 (ELYKNAAPPPGADGQQGADGQQGADGQQGADGQQGADGQQGADGQTTESSSNDETKTN) are disordered. The segment covering 590–623 (ADGQQGADGQQGADGQQGADGQQGADGQQGADGQ) has biased composition (low complexity).

This sequence belongs to the heat shock protein 70 family.

Functionally, acts as a chaperone. This Nitrosopumilus maritimus (strain SCM1) protein is Chaperone protein DnaK.